The sequence spans 346 residues: Holliday junction branch migration complex subunit RuvB (346 aa).

The interval 1–182 is large ATPase domain (RuvB-L); that stretch reads MSERLVTSNE…LGVLCSMEYY (182 aa). ATP is bound by residues Leu-21, Arg-22, Gly-63, Lys-66, Thr-67, Thr-68, 129 to 131, Arg-172, Tyr-182, and Arg-219; that span reads EDY. Residue Thr-67 coordinates Mg(2+). Residues 183-253 form a small ATPAse domain (RuvB-S) region; sequence TDEQLKEIII…AAKKSLEILE (71 aa). The tract at residues 256-346 is head domain (RuvB-H); sequence GEGFDRIDNK…DSKQCTLFEK (91 aa). DNA contacts are provided by Arg-311 and Arg-316.

Belongs to the RuvB family. Homohexamer. Forms an RuvA(8)-RuvB(12)-Holliday junction (HJ) complex. HJ DNA is sandwiched between 2 RuvA tetramers; dsDNA enters through RuvA and exits via RuvB. An RuvB hexamer assembles on each DNA strand where it exits the tetramer. Each RuvB hexamer is contacted by two RuvA subunits (via domain III) on 2 adjacent RuvB subunits; this complex drives branch migration. In the full resolvosome a probable DNA-RuvA(4)-RuvB(12)-RuvC(2) complex forms which resolves the HJ.

The protein localises to the cytoplasm. It carries out the reaction ATP + H2O = ADP + phosphate + H(+). Functionally, the RuvA-RuvB-RuvC complex processes Holliday junction (HJ) DNA during genetic recombination and DNA repair, while the RuvA-RuvB complex plays an important role in the rescue of blocked DNA replication forks via replication fork reversal (RFR). RuvA specifically binds to HJ cruciform DNA, conferring on it an open structure. The RuvB hexamer acts as an ATP-dependent pump, pulling dsDNA into and through the RuvAB complex. RuvB forms 2 homohexamers on either side of HJ DNA bound by 1 or 2 RuvA tetramers; 4 subunits per hexamer contact DNA at a time. Coordinated motions by a converter formed by DNA-disengaged RuvB subunits stimulates ATP hydrolysis and nucleotide exchange. Immobilization of the converter enables RuvB to convert the ATP-contained energy into a lever motion, pulling 2 nucleotides of DNA out of the RuvA tetramer per ATP hydrolyzed, thus driving DNA branch migration. The RuvB motors rotate together with the DNA substrate, which together with the progressing nucleotide cycle form the mechanistic basis for DNA recombination by continuous HJ branch migration. Branch migration allows RuvC to scan DNA until it finds its consensus sequence, where it cleaves and resolves cruciform DNA. The polypeptide is Holliday junction branch migration complex subunit RuvB (Clostridium perfringens (strain 13 / Type A)).